The following is a 56-amino-acid chain: Large ribosomal subunit protein bL32 (56 aa).

The interval 1 to 29 is disordered; that stretch reads MAVQQNKPSRSKRGMRRSHDALTTSSVSV.

It belongs to the bacterial ribosomal protein bL32 family.

This chain is Large ribosomal subunit protein bL32, found in Pectobacterium atrosepticum (strain SCRI 1043 / ATCC BAA-672) (Erwinia carotovora subsp. atroseptica).